We begin with the raw amino-acid sequence, 444 residues long: Exodeoxyribonuclease 7 large subunit (444 aa).

This sequence belongs to the XseA family. Heterooligomer composed of large and small subunits.

The protein resides in the cytoplasm. The catalysed reaction is Exonucleolytic cleavage in either 5'- to 3'- or 3'- to 5'-direction to yield nucleoside 5'-phosphates.. Functionally, bidirectionally degrades single-stranded DNA into large acid-insoluble oligonucleotides, which are then degraded further into small acid-soluble oligonucleotides. The sequence is that of Exodeoxyribonuclease 7 large subunit from Hahella chejuensis (strain KCTC 2396).